A 295-amino-acid chain; its full sequence is Sulfotransferase 1 family member D1 (295 aa).

Residue 48-53 coordinates 3'-phosphoadenylyl sulfate; the sequence is KSGTTW. Residues F81 and 106–108 contribute to the substrate site; that span reads KTH. H108 (proton acceptor) is an active-site residue. Residues R130 and S138 each contribute to the 3'-phosphoadenylyl sulfate site. F142 contacts substrate. Residues Y193, S227, and 257 to 259 contribute to the 3'-phosphoadenylyl sulfate site; that span reads RKG.

Belongs to the sulfotransferase 1 family.

The protein localises to the cytoplasm. Functionally, sulfotransferase with broad substrate specificity that utilizes 3'-phospho-5'-adenylyl sulfate (PAPS) as sulfonate donor to catalyze the sulfate conjugation of catecholamines, such as dopamine, prostaglandins, leukotriene E4, drugs and xenobiotic compounds. Has sulfotransferase activity towards p-nitrophenol, 2-naphthylamine and minoxidil (in vitro). Sulfonation increases the water solubility of most compounds, and therefore their renal excretion, but it can also result in bioactivation to form active metabolites. In Rattus norvegicus (Rat), this protein is Sulfotransferase 1 family member D1 (Sult1d1).